The primary structure comprises 306 residues: MSSHPPAPRKHVTIHELRRMKESGERIAMVTAYDATAARLVAVAGVDAVLVGDSLGMAVQGHESTLPVTLDQMVYHSAMVRRGLARGDGRAHLVTDMSFGSYQASADEAVKAAMRLVAEGGAEAVKLEGGAEFGEVIRRIVRAGVPVMGHIGLTPQSVHKMGGYVVQGKDSEKAQQILRDARALEAAGCYALVLECIPSELARIVTSQLRVPTIGIGAGPHCDGQVLVLNDLLGLDASFTPRFVKRFGEVGAAVQDAVGAYVGEVKARAFPDDAHSFHSSSVRLVPVERHAEAAEEEPPDAIGAPI.

Asp-53 and Asp-96 together coordinate Mg(2+). Residues 53–54, Asp-96, and Lys-126 contribute to the 3-methyl-2-oxobutanoate site; that span reads DS. A Mg(2+)-binding site is contributed by Glu-128. The active-site Proton acceptor is the Glu-195.

This sequence belongs to the PanB family. As to quaternary structure, homodecamer; pentamer of dimers. The cofactor is Mg(2+).

The protein localises to the cytoplasm. It carries out the reaction 3-methyl-2-oxobutanoate + (6R)-5,10-methylene-5,6,7,8-tetrahydrofolate + H2O = 2-dehydropantoate + (6S)-5,6,7,8-tetrahydrofolate. It participates in cofactor biosynthesis; (R)-pantothenate biosynthesis; (R)-pantoate from 3-methyl-2-oxobutanoate: step 1/2. Catalyzes the reversible reaction in which hydroxymethyl group from 5,10-methylenetetrahydrofolate is transferred onto alpha-ketoisovalerate to form ketopantoate. The protein is 3-methyl-2-oxobutanoate hydroxymethyltransferase of Anaeromyxobacter sp. (strain K).